Here is a 555-residue protein sequence, read N- to C-terminus: GPI-anchor transamidase component PIGS (555 aa).

Over 2–18 the chain is Cytoplasmic; sequence AAAGAAATHLEVARGKR. Residues R15 and R18 each coordinate a cardiolipin. The helical transmembrane segment at 19–39 threads the bilayer; that stretch reads AALFFAAVAIVLGLPLWWKTT. Topologically, residues 40–517 are lumenal; it reads ETYRASLPYS…LHLLYFPDDQ (478 aa). N-linked (GlcNAc...) asparagine glycosylation is found at N267 and N370. A helical transmembrane segment spans residues 518–532; sequence KFAIYIPLFLPMAVP. Over 533–555 the chain is Cytoplasmic; it reads ILLSLVKIFLETRKSWRKPEKTD.

Belongs to the PIGS family. In terms of assembly, heteropentamer. Part of the GPI-anchor transamidase complex, consisting of PIGK, PIGT, PIGS, PIGU and GAA1.

It localises to the endoplasmic reticulum membrane. The protein operates within glycolipid biosynthesis; glycosylphosphatidylinositol-anchor biosynthesis. Component of the glycosylphosphatidylinositol-anchor (GPI-anchor) transamidase (GPI-T) complex that catalyzes the formation of the linkage between a proprotein and a GPI-anchor and participates in GPI anchored protein biosynthesis. This is GPI-anchor transamidase component PIGS from Homo sapiens (Human).